Consider the following 218-residue polypeptide: Protein GrpE (218 aa).

Residues 1 to 75 (MTTPNGMPDN…DVDPDLDGDG (75 aa)) are disordered. The segment covering 23–40 (SADRAEQAAEEAAARQAE) has biased composition (basic and acidic residues). Acidic residues predominate over residues 48 to 75 (SEEEISPELEAEINDLLSDVDPDLDGDG).

It belongs to the GrpE family. Homodimer.

It is found in the cytoplasm. Participates actively in the response to hyperosmotic and heat shock by preventing the aggregation of stress-denatured proteins, in association with DnaK and GrpE. It is the nucleotide exchange factor for DnaK and may function as a thermosensor. Unfolded proteins bind initially to DnaJ; upon interaction with the DnaJ-bound protein, DnaK hydrolyzes its bound ATP, resulting in the formation of a stable complex. GrpE releases ADP from DnaK; ATP binding to DnaK triggers the release of the substrate protein, thus completing the reaction cycle. Several rounds of ATP-dependent interactions between DnaJ, DnaK and GrpE are required for fully efficient folding. This chain is Protein GrpE, found in Corynebacterium glutamicum (strain ATCC 13032 / DSM 20300 / JCM 1318 / BCRC 11384 / CCUG 27702 / LMG 3730 / NBRC 12168 / NCIMB 10025 / NRRL B-2784 / 534).